The following is a 345-amino-acid chain: MSTARLKINLDALAINWRNLDAKTNCETAAVVKANGYGLESGRVGKALAQAGARNFFVAIAEEGIALRRALGPGPGISVFAGHMEGDAKLLRDFQLTPMLNSLDQMLRHFESLPGHPFGVQLDSGMNRLGMEAAEWMAVRDIALDQNPVLLMSHLACSDEPGHGMNAYQLKNFIEMTEGLNIPRSLAATGGLLLGRDYHFDLCRPGIGLYGGAPYADALPVVELEVPVIQVRDLAPGESVGYGNTWIAQRDSKIATIAGGYADGLHRAFQRQGIMAYAGGTPCPVVGRISMDLITVDVTDLAEVPPYLSLMNETQTVDVLANAADTIGYEVLTSLGNRYARTYSA.

Lys-33 (proton acceptor; specific for D-alanine) is an active-site residue. Lys-33 bears the N6-(pyridoxal phosphate)lysine mark. Arg-128 provides a ligand contact to substrate. Tyr-242 serves as the catalytic Proton acceptor; specific for L-alanine. Met-291 is a substrate binding site.

It belongs to the alanine racemase family. Pyridoxal 5'-phosphate is required as a cofactor.

It carries out the reaction L-alanine = D-alanine. It functions in the pathway amino-acid biosynthesis; D-alanine biosynthesis; D-alanine from L-alanine: step 1/1. Catalyzes the interconversion of L-alanine and D-alanine. May also act on other amino acids. The protein is Alanine racemase (alr) of Ruegeria sp. (strain TM1040) (Silicibacter sp.).